A 511-amino-acid polypeptide reads, in one-letter code: 2-isopropylmalate synthase (511 aa).

Residues 4–266 (IDIFDTTLRD…ETGIQLQEIK (263 aa)) form the Pyruvate carboxyltransferase domain. Mn(2+) contacts are provided by D13, H201, H203, and N237. Residues 392–511 (ELKMVQVQYG…IKESLRAHPV (120 aa)) are regulatory domain.

This sequence belongs to the alpha-IPM synthase/homocitrate synthase family. LeuA type 1 subfamily. In terms of assembly, homodimer. Requires Mn(2+) as cofactor.

The protein localises to the cytoplasm. It catalyses the reaction 3-methyl-2-oxobutanoate + acetyl-CoA + H2O = (2S)-2-isopropylmalate + CoA + H(+). Its pathway is amino-acid biosynthesis; L-leucine biosynthesis; L-leucine from 3-methyl-2-oxobutanoate: step 1/4. Catalyzes the condensation of the acetyl group of acetyl-CoA with 3-methyl-2-oxobutanoate (2-ketoisovalerate) to form 3-carboxy-3-hydroxy-4-methylpentanoate (2-isopropylmalate). In Lysinibacillus sphaericus (strain C3-41), this protein is 2-isopropylmalate synthase.